Consider the following 611-residue polypeptide: Poly(3-hydroxyalkanoate) polymerase subunit PhaC (611 aa).

Cys349 is a catalytic residue.

This sequence belongs to the PHA/PHB synthase family. Type I PhaC subfamily. In terms of assembly, monomer.

The protein localises to the cytoplasm. The enzyme catalyses (3R)-3-hydroxybutanoyl-CoA + [(3R)-hydroxybutanoate](n) = [(3R)-hydroxybutanoate](n+1) + CoA. It participates in biopolymer metabolism; poly-(R)-3-hydroxybutanoate biosynthesis. Functionally, polymerizes D(-)-3-hydroxybutyryl-CoA to create PHB which consists of thousands of hydroxybutyrate molecules linked end to end. PHB serves as an intracellular energy reserve material when cells grow under conditions of nutrient limitation. This is Poly(3-hydroxyalkanoate) polymerase subunit PhaC from Rhizobium meliloti (strain 1021) (Ensifer meliloti).